A 488-amino-acid chain; its full sequence is UDP-N-acetylmuramoyl-L-alanyl-D-glutamate--2,6-diaminopimelate ligase (488 aa).

UDP-N-acetyl-alpha-D-muramoyl-L-alanyl-D-glutamate is bound at residue Ser29. Gly108–Ser114 is an ATP binding site. UDP-N-acetyl-alpha-D-muramoyl-L-alanyl-D-glutamate-binding positions include Thr150–Thr151, Ser177, Gln183, and Arg185. Position 217 is an N6-carboxylysine (Lys217). Meso-2,6-diaminopimelate is bound by residues Arg381, Asp405–Arg408, Gly453, and Glu457. The Meso-diaminopimelate recognition motif signature appears at Asp405–Arg408.

Belongs to the MurCDEF family. MurE subfamily. It depends on Mg(2+) as a cofactor. In terms of processing, carboxylation is probably crucial for Mg(2+) binding and, consequently, for the gamma-phosphate positioning of ATP.

It is found in the cytoplasm. The catalysed reaction is UDP-N-acetyl-alpha-D-muramoyl-L-alanyl-D-glutamate + meso-2,6-diaminopimelate + ATP = UDP-N-acetyl-alpha-D-muramoyl-L-alanyl-gamma-D-glutamyl-meso-2,6-diaminopimelate + ADP + phosphate + H(+). Its pathway is cell wall biogenesis; peptidoglycan biosynthesis. Functionally, catalyzes the addition of meso-diaminopimelic acid to the nucleotide precursor UDP-N-acetylmuramoyl-L-alanyl-D-glutamate (UMAG) in the biosynthesis of bacterial cell-wall peptidoglycan. The sequence is that of UDP-N-acetylmuramoyl-L-alanyl-D-glutamate--2,6-diaminopimelate ligase from Brucella melitensis biotype 1 (strain ATCC 23456 / CCUG 17765 / NCTC 10094 / 16M).